The following is a 295-amino-acid chain: Putative fused nickel transport protein NikMN (295 aa).

The next 8 helical transmembrane spans lie at 8–28 (LDLS…GYSI), 39–59 (LFGI…PIPG), 70–90 (LAGI…VLTI), 98–118 (GGIT…VFVG), 135–155 (FIAG…EIGI), 175–195 (ALLG…IAAA), 211–231 (LAVI…AELV), and 268–288 (AGTL…GFAL).

Belongs to the CbiM family. NikM subfamily.

It localises to the cell membrane. Functionally, may be involved in nickel transport. In Archaeoglobus fulgidus (strain ATCC 49558 / DSM 4304 / JCM 9628 / NBRC 100126 / VC-16), this protein is Putative fused nickel transport protein NikMN.